Here is a 154-residue protein sequence, read N- to C-terminus: Putative antiporter subunit mnhG2 (154 aa).

A run of 3 helical transmembrane segments spans residues 11 to 31, 51 to 71, and 72 to 92; these read IASILIFLGSIIALISAIGIV, VLLTVVGVLIYFIVNSGFFSV, and RLLLSLVFINLTSPVGMHLIS.

Belongs to the CPA3 antiporters (TC 2.A.63) subunit G family. May form a heterooligomeric complex that consists of seven subunits: mnhA2, mnhB2, mnhC2, mnhD2, mnhE2, mnhF2 and mnhG2.

Its subcellular location is the cell membrane. The chain is Putative antiporter subunit mnhG2 (mnhG2) from Staphylococcus epidermidis (strain ATCC 35984 / DSM 28319 / BCRC 17069 / CCUG 31568 / BM 3577 / RP62A).